The primary structure comprises 147 residues: Siroheme decarboxylase NirG subunit (147 aa).

Belongs to the Ahb/Nir family. In terms of assembly, probably forms a complex composed of NirD, NirL, NirG and NirH. All proteins are required for the total conversion of siroheme to didecarboxysiroheme.

It carries out the reaction siroheme + 2 H(+) = 12,18-didecarboxysiroheme + 2 CO2. It participates in porphyrin-containing compound metabolism. Its function is as follows. Involved in heme d1 biosynthesis. Catalyzes the decarboxylation of siroheme into didecarboxysiroheme. This Stutzerimonas stutzeri (Pseudomonas stutzeri) protein is Siroheme decarboxylase NirG subunit.